The following is a 71-amino-acid chain: Protein SlyX homolog (71 aa).

The disordered stretch occupies residues 49–71; it reads KIKESQSSSSMMSNEPEPPPPHY.

The protein belongs to the SlyX family.

This Pseudoalteromonas translucida (strain TAC 125) protein is Protein SlyX homolog.